The chain runs to 360 residues: Phospho-N-acetylmuramoyl-pentapeptide-transferase (360 aa).

Helical transmembrane passes span 26 to 46 (AIVSLLTALFISLWMGPRMIA), 72 to 92 (PTMGGIMILTAIVVSVLLWAY), 94 to 114 (SNPYVWCVLTVLIGYGIIGFV), 132 to 152 (WKYFWMSVIALGVAFALYLAG), 168 to 188 (VMPQLGLFYILLAYFVIVGTG), 199 to 219 (GLAIMPTVFVAGGFALVAWAT), 236 to 256 (AGELVIVCTAIVGAGLGFLWF), 263 to 283 (VFMGDVGSLALGGALGIIAVL), 288 to 308 (FLLVIMGGVFVVETLSVILQV), and 338 to 358 (VIVRFWIISLMLVLIGLATLK).

It belongs to the glycosyltransferase 4 family. MraY subfamily. It depends on Mg(2+) as a cofactor.

The protein localises to the cell inner membrane. It catalyses the reaction UDP-N-acetyl-alpha-D-muramoyl-L-alanyl-gamma-D-glutamyl-meso-2,6-diaminopimeloyl-D-alanyl-D-alanine + di-trans,octa-cis-undecaprenyl phosphate = di-trans,octa-cis-undecaprenyl diphospho-N-acetyl-alpha-D-muramoyl-L-alanyl-D-glutamyl-meso-2,6-diaminopimeloyl-D-alanyl-D-alanine + UMP. The protein operates within cell wall biogenesis; peptidoglycan biosynthesis. In terms of biological role, catalyzes the initial step of the lipid cycle reactions in the biosynthesis of the cell wall peptidoglycan: transfers peptidoglycan precursor phospho-MurNAc-pentapeptide from UDP-MurNAc-pentapeptide onto the lipid carrier undecaprenyl phosphate, yielding undecaprenyl-pyrophosphoryl-MurNAc-pentapeptide, known as lipid I. In Enterobacter sp. (strain 638), this protein is Phospho-N-acetylmuramoyl-pentapeptide-transferase.